Consider the following 619-residue polypeptide: MALLQIAEPGQSAAPHEHRLAVGIDLGTTNSLVAAVRSGEALTLADSEGRHSLPSVVHYGVDSTLVGHDAEALSALFPAQTLVSVKRFMGKSLSDIQAGMQEFPYEFSVSEQGLPLFVMPQGAVNPIQASADILRPLIERAEKTLGGQLQGVVITVPAYFDDAQRQGTKDAAELLGVKVLRLLNEPTAAAIAYGLDSKQEGVIAVYDLGGGTFDISVLRLSGGVFEVLATGGNSALGGDDFDHLLQQHLQAAWGLTSASAQLSRQLLIEARRVKEALTDNDTVTAHVSLDGSDLSLEISKADFEALIATLVKKTISSCRRTLRDAGISTDEVIETVMVGGSTRVPLVRQQVEQFFNKTPLTSIDPDRVVAIGAAIQADILVGNKPDSDLLLLDVIPLSLGIETMGGLVEKVIPRNTTIPVARAQEFTTFKDGQTAMAFHVVQGERELVDDCRSLARFTLTDIPALAAGAAHIRVTFQVDADGLLSVTAMEKSTGVNTSIQVKPSFGLSDLEIATMLKDSMKHAKDDISLRMLTEQKVEAMRVIESLQAALNNDGDLLELSERESLQAALANLGEIAKGNDRDAIEQAIKALDDKTQDFASLRMDNSIKAALKGQSIDNI.

It belongs to the heat shock protein 70 family.

In terms of biological role, chaperone involved in the maturation of iron-sulfur cluster-containing proteins. Has a low intrinsic ATPase activity which is markedly stimulated by HscB. The chain is Chaperone protein HscA homolog from Shewanella denitrificans (strain OS217 / ATCC BAA-1090 / DSM 15013).